Reading from the N-terminus, the 258-residue chain is C4b-binding protein beta chain (258 aa).

Positions M1 to A15 are cleaved as a signal peptide. In terms of domain architecture, Sushi 1; atypical; lacks a Cys spans G18 to L75. Residues N27, N67, N89, N95, and N114 are each glycosylated (N-linked (GlcNAc...) asparagine). Intrachain disulfides connect C46-C73, C78-C118, C104-C131, C136-C176, and C162-C188. Sushi domains follow at residues G76–S133 and R134–S190. Residue N218 is glycosylated (N-linked (GlcNAc...) asparagine).

Disulfide-linked complex of alpha and beta chains.

The protein resides in the secreted. In terms of biological role, controls the classical pathway of complement activation. It binds as a cofactor to C3b/C4b inactivator (C3bINA), which then hydrolyzes the complement fragment C4b. It also accelerates the degradation of the C4bC2a complex (C3 convertase) by dissociating the complement fragment C2a. It also interacts with anticoagulant protein S and with serum amyloid P component. The polypeptide is C4b-binding protein beta chain (C4bpb) (Rattus norvegicus (Rat)).